We begin with the raw amino-acid sequence, 456 residues long: Protein disulfide-isomerase TMX3 (456 aa).

The signal sequence occupies residues 1 to 29 (MANAVGRRSWAALRLCAAVILLDLAVCKG). The 102-residue stretch at 30–131 (FVEDLNESFK…KDDIIEFAHR (102 aa)) folds into the Thioredoxin domain. Over 30 to 378 (FVEDLNESFK…TIVSIFKSSP (349 aa)) the chain is Lumenal. Asn35 carries N-linked (GlcNAc...) asparagine glycosylation. Catalysis depends on nucleophile residues Cys56 and Cys59. Cys56 and Cys59 are joined by a disulfide. Asn261 and Asn316 each carry an N-linked (GlcNAc...) asparagine glycan. Residues 379–399 (LMGCFLFGLPLGVISIMCYGI) form a helical membrane-spanning segment. The Cytoplasmic segment spans residues 400–456 (YTADTDGGYIEERYEVSKSEMENQEQIEESKEQESSSGGSLAPTVQEPKDVLEKKKD). The tract at residues 416–456 (SKSEMENQEQIEESKEQESSSGGSLAPTVQEPKDVLEKKKD) is disordered. Basic and acidic residues predominate over residues 446–456 (EPKDVLEKKKD). Residues 453 to 456 (KKKD) carry the Di-lysine motif motif.

The protein belongs to the protein disulfide isomerase family.

Its subcellular location is the endoplasmic reticulum membrane. It catalyses the reaction Catalyzes the rearrangement of -S-S- bonds in proteins.. Its function is as follows. Probable disulfide isomerase, which participates in the folding of proteins containing disulfide bonds. May act as a dithiol oxidase. Acts as a regulator of endoplasmic reticulum-mitochondria contact sites via its ability to regulate redox signals. This Mus musculus (Mouse) protein is Protein disulfide-isomerase TMX3 (Tmx3).